We begin with the raw amino-acid sequence, 744 residues long: Biotin sulfoxide reductase (744 aa).

Ser121 contacts Mo-bis(molybdopterin guanine dinucleotide).

Belongs to the prokaryotic molybdopterin-containing oxidoreductase family. Mo-bis(molybdopterin guanine dinucleotide) is required as a cofactor.

This enzyme may serve as a scavenger, allowing the cell to utilize biotin sulfoxide as a biotin source. It reduces a spontaneous oxidation product of biotin, D-biotin D-sulfoxide (BSO or BDS), back to biotin. The polypeptide is Biotin sulfoxide reductase (Cereibacter sphaeroides (Rhodobacter sphaeroides)).